The primary structure comprises 275 residues: NH(3)-dependent NAD(+) synthetase (275 aa).

Gly46–Ser53 serves as a coordination point for ATP. Asp52 is a binding site for Mg(2+). Deamido-NAD(+) is bound at residue Arg140. Thr160 contacts ATP. Residue Glu165 coordinates Mg(2+). Deamido-NAD(+)-binding residues include Lys173 and Asp180. Residues Lys189 and Thr211 each coordinate ATP. His260 to Lys261 lines the deamido-NAD(+) pocket.

Belongs to the NAD synthetase family. As to quaternary structure, homodimer.

The catalysed reaction is deamido-NAD(+) + NH4(+) + ATP = AMP + diphosphate + NAD(+) + H(+). Its pathway is cofactor biosynthesis; NAD(+) biosynthesis; NAD(+) from deamido-NAD(+) (ammonia route): step 1/1. In terms of biological role, catalyzes the ATP-dependent amidation of deamido-NAD to form NAD. Uses ammonia as a nitrogen source. The protein is NH(3)-dependent NAD(+) synthetase of Shigella dysenteriae serotype 1 (strain Sd197).